The sequence spans 465 residues: Ribulose bisphosphate carboxylase large chain (465 aa).

Lysine 4 carries the post-translational modification N6,N6,N6-trimethyllysine. Asparagine 113 and threonine 163 together coordinate substrate. Lysine 165 functions as the Proton acceptor in the catalytic mechanism. Substrate is bound at residue lysine 167. The Mg(2+) site is built by lysine 191, aspartate 193, and glutamate 194. N6-carboxylysine is present on lysine 191. Residue histidine 284 is the Proton acceptor of the active site. Substrate is bound by residues arginine 285, histidine 317, and serine 369.

The protein belongs to the RuBisCO large chain family. Type I subfamily. As to quaternary structure, heterohexadecamer of 8 large chains and 8 small chains; disulfide-linked. The disulfide link is formed within the large subunit homodimers. The cofactor is Mg(2+). In terms of processing, the disulfide bond which can form in the large chain dimeric partners within the hexadecamer appears to be associated with oxidative stress and protein turnover.

It localises to the plastid. It is found in the chloroplast. It carries out the reaction 2 (2R)-3-phosphoglycerate + 2 H(+) = D-ribulose 1,5-bisphosphate + CO2 + H2O. The enzyme catalyses D-ribulose 1,5-bisphosphate + O2 = 2-phosphoglycolate + (2R)-3-phosphoglycerate + 2 H(+). In terms of biological role, ruBisCO catalyzes two reactions: the carboxylation of D-ribulose 1,5-bisphosphate, the primary event in carbon dioxide fixation, as well as the oxidative fragmentation of the pentose substrate in the photorespiration process. Both reactions occur simultaneously and in competition at the same active site. This Ailanthus altissima (Tree-of-heaven) protein is Ribulose bisphosphate carboxylase large chain.